We begin with the raw amino-acid sequence, 516 residues long: BAR/IMD domain-containing adapter protein 2-like 2 (516 aa).

The IMD domain occupies 1–227; that stretch reads MSGVNSDLLH…PTPLDQEAQL (227 aa). The disordered stretch occupies residues 200-273; sequence ADGWKEKVSE…SSSVGESLGL (74 aa). Basic and acidic residues predominate over residues 201-212; that stretch reads DGWKEKVSESRS. Residues 226–236 are compositionally biased toward polar residues; sequence QLKSSVGSLLQ. Residues 238–247 are compositionally biased toward basic and acidic residues; the sequence is GDREMDREPL. A compositionally biased stretch (low complexity) spans 249–270; the sequence is RVPSRAPSPLPSRSRSSSVGES. The SH3 domain occupies 274–337; that stretch reads GGGRSMRAIV…PAAYVASTED (64 aa). Polar residues predominate over residues 355–376; the sequence is LLEPTSQSESDTQTYSEVSSPV. A disordered region spans residues 355 to 516; the sequence is LLEPTSQSES…TNDRSAPRIQ (162 aa). The segment covering 434–450 has biased composition (basic and acidic residues); sequence PDRRAESHFESKVELKN. The span at 454 to 465 shows a compositional bias: pro residues; that stretch reads LPPPAPPLPNSP.

The protein localises to the cell membrane. In terms of biological role, phosphoinositides-binding protein that induces the formation of planar or gently curved membrane structures. This chain is BAR/IMD domain-containing adapter protein 2-like 2 (baiap2l2), found in Danio rerio (Zebrafish).